The chain runs to 415 residues: Gamma-glutamyl phosphate reductase 1 (415 aa).

This sequence belongs to the gamma-glutamyl phosphate reductase family.

It is found in the cytoplasm. It carries out the reaction L-glutamate 5-semialdehyde + phosphate + NADP(+) = L-glutamyl 5-phosphate + NADPH + H(+). The protein operates within amino-acid biosynthesis; L-proline biosynthesis; L-glutamate 5-semialdehyde from L-glutamate: step 2/2. Its function is as follows. Catalyzes the NADPH-dependent reduction of L-glutamate 5-phosphate into L-glutamate 5-semialdehyde and phosphate. The product spontaneously undergoes cyclization to form 1-pyrroline-5-carboxylate. The sequence is that of Gamma-glutamyl phosphate reductase 1 from Bacillus licheniformis (strain ATCC 14580 / DSM 13 / JCM 2505 / CCUG 7422 / NBRC 12200 / NCIMB 9375 / NCTC 10341 / NRRL NRS-1264 / Gibson 46).